The following is a 446-amino-acid chain: Tubulin beta-2 chain (446 aa).

GTP-binding residues include glutamine 11, glutamate 69, serine 138, glycine 142, threonine 143, glycine 144, asparagine 204, and asparagine 226. Position 69 (glutamate 69) interacts with Mg(2+).

It belongs to the tubulin family. As to quaternary structure, dimer of alpha and beta chains. A typical microtubule is a hollow water-filled tube with an outer diameter of 25 nm and an inner diameter of 15 nM. Alpha-beta heterodimers associate head-to-tail to form protofilaments running lengthwise along the microtubule wall with the beta-tubulin subunit facing the microtubule plus end conferring a structural polarity. Microtubules usually have 13 protofilaments but different protofilament numbers can be found in some organisms and specialized cells. It depends on Mg(2+) as a cofactor.

The protein resides in the cytoplasm. It localises to the cytoskeleton. Tubulin is the major constituent of microtubules, a cylinder consisting of laterally associated linear protofilaments composed of alpha- and beta-tubulin heterodimers. Microtubules grow by the addition of GTP-tubulin dimers to the microtubule end, where a stabilizing cap forms. Below the cap, tubulin dimers are in GDP-bound state, owing to GTPase activity of alpha-tubulin. This Hypocrea rufa (Trichoderma viride) protein is Tubulin beta-2 chain (tub2).